A 527-amino-acid polypeptide reads, in one-letter code: MAMAMAMRRAAALGARHILAASSTSSSGVLLRRHMSVDAGAAMEKVRAAGLLRTQGLIGGKWVDAYDGKTIEVQNPATGETLANVSCMGSKETSDAIASAHSTFYSWSKLTANERSKALRKWHDLIISHKEELALLMTLEQGKPMKEALVEVTYGASFIEYFAEEAKRIYGDIIPPTLSDRRLLVLKQPVGVVGAVTPWNFPLAMITRKVGPALACGCTVVVKPSEFTPLTALAAADLALQAGIPAGAINVVMGNAPEIGDALLQSTQVRKITFTGSTAVGKKLMAGSANTVKKVSLELGGNAPCIVFDDADIDVAIKGSLAAKFRNSGQTCVCANRILVQEGIYEKFASAFIKAVQSLKVGNGLEESTSQGPLINEAAVQKVEKFINDATSKGANIMLGGKRHSLGMSFYEPTVVGNVSNDMLLFREEVFGPVAPLVPFKTEEDAIRMANDTNAGLAAYIFTKSIPRSWRVSEALEYGLVGVNEGIISTEVAPFGGVKQSGLGREGSKYGMDEYLELKYICMGNLN.

The N-terminal 35 residues, 1-35 (MAMAMAMRRAAALGARHILAASSTSSSGVLLRRHM), are a transit peptide targeting the mitochondrion. Residues Arg208, 223–226 (KPSE), and 276–281 (GSTAVG) contribute to the NAD(+) site. Residue Arg208 participates in substrate binding. Catalysis depends on Glu298, which acts as the Proton acceptor. Positions 326, 332, and 489 each coordinate substrate. The active-site Nucleophile is the Cys332. An intrachain disulfide couples Cys332 to Cys334.

This sequence belongs to the aldehyde dehydrogenase family. As to quaternary structure, homotetramer.

It is found in the mitochondrion matrix. It carries out the reaction succinate semialdehyde + NAD(+) + H2O = succinate + NADH + 2 H(+). It functions in the pathway amino-acid degradation; 4-aminobutanoate degradation. Redox-regulated. Inhibited under oxydizing conditions. Oxidizes specifically succinate semialdehyde. Involved in plant response to environmental stress by preventing the accumulation of reactive oxygen species. This is Succinate-semialdehyde dehydrogenase, mitochondrial (ALDH5F1) from Oryza sativa subsp. japonica (Rice).